The chain runs to 167 residues: Low molecular mass early light-inducible protein HV60, chloroplastic (167 aa).

The N-terminal 33 residues, 1–33, are a transit peptide targeting the chloroplast; sequence MATMMAMSSFAGAAVLPRGSARSLPALGRRTLV. The next 2 helical transmembrane spans lie at 101-121 and 145-165; these read GQAWFAYTVAMLSMASLVPLL and FAMIGLVALAATEIITGTPFI.

This sequence belongs to the ELIP/psbS family.

Its subcellular location is the plastid. The protein localises to the chloroplast membrane. Probably involved in the integration of pigments into the mature pigment-protein complexes. The polypeptide is Low molecular mass early light-inducible protein HV60, chloroplastic (Hordeum vulgare (Barley)).